The sequence spans 220 residues: A-type ATP synthase subunit K (220 aa).

6 consecutive transmembrane segments (helical) span residues 5–25 (LILGAVGAGLAVGIAGLGSGI), 63–83 (FLVAILILFVFKTVSPWAMFA), 90–110 (LAGLSAIGQGIAASAGLGAVA), 125–145 (LPETQAIYGLLIAILLLVGVF), 155–175 (AALGAGFAVGFAGLSGIGQGI), and 195–215 (LVLAVMPETFAIFGLLIAILI).

This sequence belongs to the V-ATPase proteolipid subunit family. The A-type ATPase is composed of subunits A(3), B(3), C, D, E(1 or 2), F, H(2), I and K(x). Subunit K dimerizes and may form higher oligomers.

It localises to the cell membrane. In terms of biological role, component of the A-type ATP synthase that produces ATP from ADP in the presence of a proton gradient across the membrane. This chain is A-type ATP synthase subunit K, found in Methanocaldococcus jannaschii (strain ATCC 43067 / DSM 2661 / JAL-1 / JCM 10045 / NBRC 100440) (Methanococcus jannaschii).